We begin with the raw amino-acid sequence, 106 residues long: Nucleoid-associated protein DP1429 (106 aa).

It belongs to the YbaB/EbfC family. In terms of assembly, homodimer.

It localises to the cytoplasm. The protein resides in the nucleoid. Binds to DNA and alters its conformation. May be involved in regulation of gene expression, nucleoid organization and DNA protection. In Desulfotalea psychrophila (strain LSv54 / DSM 12343), this protein is Nucleoid-associated protein DP1429.